A 199-amino-acid chain; its full sequence is MGSVKSSNPALEGLHEELGVMEEQIRSIIESFIELGVSVYDFPGTPEASQGMVTNLKRNVDRIFKLNQTSNDPQSALKDVNVPLEVVQYIEDGRNPDIYTREFVEAIRRSNQYQRAKMHGMGMLRDSLAEKIKEQFPELKDDVENIVQRTNMKPTGQARVNSGTTNMTTTAEQSNVVNATAGDVGTNANTTESVEQNGI.

Belongs to the Mediator complex subunit 10 family. Component of the Mediator complex.

The protein resides in the nucleus. Its function is as follows. Component of the Mediator complex, a coactivator involved in the regulated transcription of nearly all RNA polymerase II-dependent genes. Mediator functions as a bridge to convey information from gene-specific regulatory proteins to the basal RNA polymerase II transcription machinery. Mediator is recruited to promoters by direct interactions with regulatory proteins and serves as a scaffold for the assembly of a functional preinitiation complex with RNA polymerase II and the general transcription factors. This chain is Mediator of RNA polymerase II transcription subunit 10 (NUT2), found in Candida glabrata (strain ATCC 2001 / BCRC 20586 / JCM 3761 / NBRC 0622 / NRRL Y-65 / CBS 138) (Yeast).